The chain runs to 224 residues: Ribonuclease 3 (224 aa).

An RNase III domain is found at 4–127 (IEKLERSLTY…IIGAIHLEAG (124 aa)). Glu40 is a Mg(2+) binding site. The active site involves Asp44. Mg(2+)-binding residues include Asp113 and Glu116. Residue Glu116 is part of the active site. The 70-residue stretch at 154–223 (DYKTKLQEIT…AKIALEKLGA (70 aa)) folds into the DRBM domain.

It belongs to the ribonuclease III family. Homodimer. Mg(2+) is required as a cofactor.

Its subcellular location is the cytoplasm. The catalysed reaction is Endonucleolytic cleavage to 5'-phosphomonoester.. In terms of biological role, digests double-stranded RNA. Involved in the processing of primary rRNA transcript to yield the immediate precursors to the large and small rRNAs (23S and 16S). Processes some mRNAs, and tRNAs when they are encoded in the rRNA operon. Processes pre-crRNA and tracrRNA of type II CRISPR loci if present in the organism. This is Ribonuclease 3 from Campylobacter jejuni (strain RM1221).